Reading from the N-terminus, the 269-residue chain is Undecaprenyl-diphosphatase (269 aa).

Helical transmembrane passes span 4 to 24 (IELW…WLPI), 50 to 70 (LWLH…PYWL), 86 to 106 (LFAI…YKVL), 113 to 133 (ATGD…GLLL), 146 to 166 (VNVV…IPGI), 186 to 206 (AVWL…ALEL), 220 to 240 (WMVT…EVLL), and 246 to 266 (LDFS…PLAA).

Belongs to the UppP family.

The protein localises to the cell membrane. The catalysed reaction is di-trans,octa-cis-undecaprenyl diphosphate + H2O = di-trans,octa-cis-undecaprenyl phosphate + phosphate + H(+). Functionally, catalyzes the dephosphorylation of undecaprenyl diphosphate (UPP). The polypeptide is Undecaprenyl-diphosphatase (Methanopyrus kandleri (strain AV19 / DSM 6324 / JCM 9639 / NBRC 100938)).